The following is a 47-amino-acid chain: Defensin-like protein 1 (47 aa).

Intrachain disulfides connect cysteine 3–cysteine 47, cysteine 14–cysteine 36, cysteine 20–cysteine 41, and cysteine 24–cysteine 43.

Belongs to the DEFL family. Protease inhibitor I18 (RTI/MTI-2) subfamily.

The chain is Defensin-like protein 1 from Sorghum bicolor (Sorghum).